A 614-amino-acid chain; its full sequence is Maltose permease MAL31 (614 aa).

Residues Met-1–Ser-48 are disordered. Residues Met-1–Thr-108 lie on the Cytoplasmic side of the membrane. The span at Glu-38–Ser-48 shows a compositional bias: basic and acidic residues. A helical membrane pass occupies residues Thr-109–Phe-129. Topologically, residues Gln-130–Glu-144 are extracellular. A helical transmembrane segment spans residues Ile-145–Leu-165. The Cytoplasmic portion of the chain corresponds to Gln-166–Thr-180. Residues Leu-181–Leu-201 form a helical membrane-spanning segment. Position 202 (Gly-202) is a topological domain, extracellular. The chain crosses the membrane as a helical span at residues Met-203–Val-223. The Cytoplasmic segment spans residues Ser-224 to Tyr-236. Residues Tyr-237–Met-257 form a helical membrane-spanning segment. The Extracellular portion of the chain corresponds to Lys-258–Lys-272. The chain crosses the membrane as a helical span at residues Leu-273 to Pro-293. The Cytoplasmic portion of the chain corresponds to Glu-294–Arg-364. A helical membrane pass occupies residues Ile-365–Thr-385. The Extracellular portion of the chain corresponds to Tyr-386–Ala-398. The helical transmembrane segment at Phe-399–Ala-419 threads the bilayer. Topologically, residues Ser-420–Asp-427 are cytoplasmic. The helical transmembrane segment at Leu-428–Cys-448 threads the bilayer. Residues Ser-449–Ala-460 lie on the Extracellular side of the membrane. The chain crosses the membrane as a helical span at residues Leu-461–Val-481. Topologically, residues Ser-482–Thr-493 are cytoplasmic. The chain crosses the membrane as a helical span at residues Ile-494–Tyr-514. Topologically, residues Gln-515 to Lys-526 are extracellular. Residues Ser-527–Pro-547 traverse the membrane as a helical segment. Residues Glu-548–Lys-614 are Cytoplasmic-facing. The segment at Glu-595–Lys-614 is disordered.

Belongs to the major facilitator superfamily. Sugar transporter (TC 2.A.1.1) family.

Its subcellular location is the membrane. High-affinity uptake of maltose and maltotriose. Also transports turanose but not alpha-methylglucoside, melezitose or trehalose. The protein is Maltose permease MAL31 (MAL31) of Saccharomyces cerevisiae (strain ATCC 204508 / S288c) (Baker's yeast).